Reading from the N-terminus, the 385-residue chain is 5'-AMP-activated protein kinase catalytic subunit alpha-1 (385 aa).

In terms of domain architecture, Protein kinase spans 1 to 229 (DGRVKIGHYI…IKDIREHEWF (229 aa)). Threonine 14 is modified (phosphothreonine). 15-22 (LGVGTFGK) contributes to the ATP binding site. The Proton acceptor role is filled by aspartate 100. Threonine 133 carries the post-translational modification Phosphothreonine; by LKB1 and CaMKK2. 2 positions are modified to phosphothreonine: threonine 219 and threonine 276. The AIS stretch occupies residues 252–297 (EALKQDPLAVAYHLIIDNRDFYLATSPPDSFLDDHHLTRVPFLVAE). At serine 277 the chain carries Phosphoserine. Serine 281 carries the post-translational modification Phosphoserine; by ULK1. Position 289 is a phosphothreonine; by ULK1 (threonine 289). Residue threonine 298 is modified to Phosphothreonine. Phosphoserine occurs at positions 353 and 383.

Belongs to the protein kinase superfamily. CAMK Ser/Thr protein kinase family. SNF1 subfamily. In terms of assembly, AMPK is a heterotrimer of an alpha catalytic subunit (PRKAA1 or PRKAA2), a beta (PRKAB1 or PRKAB2) and a gamma non-catalytic subunits (PRKAG1, PRKAG2 or PRKAG3). Interacts with FNIP1 and FNIP2. Mg(2+) serves as cofactor. In terms of processing, ubiquitinated. Phosphorylated at Thr-133 by STK11/LKB1 in complex with STE20-related adapter-alpha (STRADA) pseudo kinase and CAB39. Also phosphorylated at Thr-133 by CAMKK2; triggered by a rise in intracellular calcium ions, without detectable changes in the AMP/ATP ratio. CAMKK1 can also phosphorylate Thr-133, but at a much lower level. Dephosphorylated by protein phosphatase 2A and 2C (PP2A and PP2C). Phosphorylated by ULK1 and ULK2; leading to negatively regulate AMPK activity and suggesting the existence of a regulatory feedback loop between ULK1, ULK2 and AMPK. Dephosphorylated by PPM1A and PPM1B. Post-translationally, glycosylated; O-GlcNAcylated by OGT, promoting the AMP-activated protein kinase (AMPK) activity.

It localises to the cytoplasm. Its subcellular location is the nucleus. The catalysed reaction is L-seryl-[protein] + ATP = O-phospho-L-seryl-[protein] + ADP + H(+). It carries out the reaction L-threonyl-[protein] + ATP = O-phospho-L-threonyl-[protein] + ADP + H(+). It catalyses the reaction L-seryl-[acetyl-CoA carboxylase] + ATP = O-phospho-L-seryl-[acetyl-CoA carboxylase] + ADP + H(+). The enzyme catalyses L-seryl-[3-hydroxy-3-methylglutaryl-coenzyme A reductase] + ATP = O-phospho-L-seryl-[3-hydroxy-3-methylglutaryl-coenzyme A reductase] + ADP + H(+). The catalysed reaction is L-seryl-[tau protein] + ATP = O-phospho-L-seryl-[tau protein] + ADP + H(+). It carries out the reaction L-threonyl-[tau protein] + ATP = O-phospho-L-threonyl-[tau protein] + ADP + H(+). With respect to regulation, activated by phosphorylation on Thr-133. Binding of AMP to non-catalytic gamma subunit (PRKAG1, PRKAG2 or PRKAG3) results in allosteric activation, inducing phosphorylation on Thr-133. AMP-binding to gamma subunit also sustains activity by preventing dephosphorylation of Thr-133. ADP also stimulates Thr-133 phosphorylation, without stimulating already phosphorylated AMPK. ATP promotes dephosphorylation of Thr-133, rendering the enzyme inactive. Under physiological conditions AMPK mainly exists in its inactive form in complex with ATP, which is much more abundant than AMP. Selectively inhibited by compound C (6-[4-(2-Piperidin-1-yl-ethoxy)-phenyl)]-3-pyridin-4-yl-pyyrazolo[1,5-a] pyrimidine. Activated by resveratrol, a natural polyphenol present in red wine, and S17834, a synthetic polyphenol. Functionally, catalytic subunit of AMP-activated protein kinase (AMPK), an energy sensor protein kinase that plays a key role in regulating cellular energy metabolism. In response to reduction of intracellular ATP levels, AMPK activates energy-producing pathways and inhibits energy-consuming processes: inhibits protein, carbohydrate and lipid biosynthesis, as well as cell growth and proliferation. AMPK acts via direct phosphorylation of metabolic enzymes, and by longer-term effects via phosphorylation of transcription regulators. Regulates lipid synthesis by phosphorylating and inactivating lipid metabolic enzymes such as ACACA, ACACB, GYS1, HMGCR and LIPE; regulates fatty acid and cholesterol synthesis by phosphorylating acetyl-CoA carboxylase (ACACA and ACACB) and hormone-sensitive lipase (LIPE) enzymes, respectively. Promotes lipolysis of lipid droplets by mediating phosphorylation of isoform 1 of CHKA (CHKalpha2). Regulates insulin-signaling and glycolysis by phosphorylating IRS1, PFKFB2 and PFKFB3. AMPK stimulates glucose uptake in muscle by increasing the translocation of the glucose transporter SLC2A4/GLUT4 to the plasma membrane, possibly by mediating phosphorylation of TBC1D4/AS160. Regulates transcription and chromatin structure by phosphorylating transcription regulators involved in energy metabolism such as CRTC2/TORC2, FOXO3, histone H2B, HDAC5, MEF2C, MLXIPL/ChREBP, EP300, HNF4A, p53/TP53, SREBF1, SREBF2 and PPARGC1A. Acts as a key regulator of glucose homeostasis in liver by phosphorylating CRTC2/TORC2, leading to CRTC2/TORC2 sequestration in the cytoplasm. In response to stress, phosphorylates 'Ser-36' of histone H2B (H2BS36ph), leading to promote transcription. Acts as a key regulator of cell growth and proliferation by phosphorylating FNIP1, TSC2, RPTOR, WDR24 and ATG1/ULK1: in response to nutrient limitation, negatively regulates the mTORC1 complex by phosphorylating RPTOR component of the mTORC1 complex and by phosphorylating and activating TSC2. Also phosphorylates and inhibits GATOR2 subunit WDR24 in response to nutrient limitation, leading to suppress glucose-mediated mTORC1 activation. In response to energetic stress, phosphorylates FNIP1, inactivating the non-canonical mTORC1 signaling, thereby promoting nuclear translocation of TFEB and TFE3, and inducing transcription of lysosomal or autophagy genes. In response to nutrient limitation, promotes autophagy by phosphorylating and activating ATG1/ULK1. In that process also activates WDR45/WIPI4. Phosphorylates CASP6, thereby preventing its autoprocessing and subsequent activation. In response to nutrient limitation, phosphorylates transcription factor FOXO3 promoting FOXO3 mitochondrial import. Also acts as a regulator of cellular polarity by remodeling the actin cytoskeleton; probably by indirectly activating myosin. AMPK also acts as a regulator of circadian rhythm by mediating phosphorylation of CRY1, leading to destabilize it. May regulate the Wnt signaling pathway by phosphorylating CTNNB1, leading to stabilize it. Also has tau-protein kinase activity: in response to amyloid beta A4 protein (APP) exposure, activated by CAMKK2, leading to phosphorylation of MAPT/TAU; however the relevance of such data remains unclear in vivo. Also phosphorylates CFTR, EEF2K, KLC1, NOS3 and SLC12A1. Regulates hepatic lipogenesis. Activated via SIRT3, represses sterol regulatory element-binding protein (SREBP) transcriptional activities and ATP-consuming lipogenesis to restore cellular energy balance. Upon stress, regulates mitochondrial fragmentation through phosphorylation of MTFR1L. This is 5'-AMP-activated protein kinase catalytic subunit alpha-1 (PRKAA1) from Sus scrofa (Pig).